Reading from the N-terminus, the 429-residue chain is MKKQRNLRSMAAQAVEQVVEQGQSLSNILPPLQQKVSDKDKALLQELCFGVLRTLSQLDWLINKLMARPMTGKQRTVHYLIMVGLYQLLYTRIPPHAALAETVEGAVAIKRPQLKGLINGVLRQFQRQQEELLAEFNASDACYLHPSWLLKRLQKAYPEQWQSIVEANNQRPPMWLRVNRTHHSRDSWLALLDEAGMKGFPHADYPDAVRLETPAPVHVLPGFEEGWVTVQDASAQGCMAWLAPQNGEHILDLCAAPGGKTTHILEVAPEAQVVAVDIDEQRLSRVYDNLKRLGMKATVKQGDGRYPSQWCGEQQFDRILLDAPCSATGVIRRHPDIKWLRRDRDIPELAQLQSEILDAIWPHLKSGGTLIYATCSVLPEENSLQIKAFLQRTADAELCETGTPEQPGKQNLPGAEEGDGFFYAKLIKK.

S-adenosyl-L-methionine contacts are provided by residues 254 to 260, Asp277, Asp303, and Asp322; that span reads CAAPGGK. The active-site Nucleophile is the Cys375.

This sequence belongs to the class I-like SAM-binding methyltransferase superfamily. RsmB/NOP family.

The protein resides in the cytoplasm. The enzyme catalyses cytidine(967) in 16S rRNA + S-adenosyl-L-methionine = 5-methylcytidine(967) in 16S rRNA + S-adenosyl-L-homocysteine + H(+). Its function is as follows. Specifically methylates the cytosine at position 967 (m5C967) of 16S rRNA. This is Ribosomal RNA small subunit methyltransferase B from Escherichia coli O17:K52:H18 (strain UMN026 / ExPEC).